Consider the following 315-residue polypeptide: DNA-directed RNA polymerase subunit alpha (315 aa).

An alpha N-terminal domain (alpha-NTD) region spans residues 1–228 (MAQFQIECVE…DLFNPLKDIS (228 aa)). An alpha C-terminal domain (alpha-CTD) region spans residues 243–315 (TAQIPIEELQ…LPQERSSKHN (73 aa)).

Belongs to the RNA polymerase alpha chain family. Homodimer. In cyanobacteria the RNAP catalytic core is composed of 2 alpha, 1 beta, 1 beta', 1 gamma and 1 omega subunit. When a sigma factor is associated with the core the holoenzyme is formed, which can initiate transcription.

It catalyses the reaction RNA(n) + a ribonucleoside 5'-triphosphate = RNA(n+1) + diphosphate. DNA-dependent RNA polymerase catalyzes the transcription of DNA into RNA using the four ribonucleoside triphosphates as substrates. The polypeptide is DNA-directed RNA polymerase subunit alpha (Nostoc sp. (strain PCC 7120 / SAG 25.82 / UTEX 2576)).